The primary structure comprises 534 residues: MVQRWLYSTNAKDIAVLYFMLAIFSGMAGTAMSLIIRLELAAPGSQYLHGNSQLFNVLVVGHAVLMIFFLVMPALIGGFGNYLLPLMIGATDTAFPRINNIAFWVLPMGLVCLVTSTLVESGAGTGWTVYPPLSSIQAHSGPSVDLAIFALHLTSISSLLGAINFIVTTLNMRTNGMTMHKLPLFVWSIFITAFLLLLSLPVLSAGITMLLLDRNFNTSFFEVSGGGDPILYEHLFWFFGHPEVYILIIPGFGIISHVVSTYSKKPVFGEISMVYAMASIGLLGFLVWSHHMYIVGLDADTRAYFTSATMIIAIPTGIKIFSWLATIHGGSIRLATPMLYAIAFLFLFTMGGLTGVALANASLDVAFHDTYYVVGHFHYVLSMGAIFSLFAGYYYWSPQILGLNYNEKLAQIQFWLIFIGANVIFFPMHFLGINGMPRRIPDYPDAFAGWNYVASIGSFIATLSLFLFIYILYDQLVNGLNNKVNNKSVIYNKAPDFVESNTIFNLNTVKSSSIEFLLTSPPAVHSFNTPAVQS.

At 1-14 (MVQRWLYSTNAKDI) the chain is on the mitochondrial matrix side. A helical membrane pass occupies residues 15-39 (AVLYFMLAIFSGMAGTAMSLIIRLE). The Ca(2+) site is built by E39, A42, and G44. Residues 40–54 (LAAPGSQYLHGNSQL) lie on the Mitochondrial intermembrane side of the membrane. A helical membrane pass occupies residues 55 to 88 (FNVLVVGHAVLMIFFLVMPALIGGFGNYLLPLMI). Residue H62 participates in Fe(II)-heme a binding. Residues 89-97 (GATDTAFPR) lie on the Mitochondrial matrix side of the membrane. Residues 98–118 (INNIAFWVLPMGLVCLVTSTL) form a helical membrane-spanning segment. Topologically, residues 119 to 142 (VESGAGTGWTVYPPLSSIQAHSGP) are mitochondrial intermembrane. The chain crosses the membrane as a helical span at residues 143-171 (SVDLAIFALHLTSISSLLGAINFIVTTLN). The Mitochondrial matrix segment spans residues 172 to 183 (MRTNGMTMHKLP). A helical transmembrane segment spans residues 184 to 215 (LFVWSIFITAFLLLLSLPVLSAGITMLLLDRN). Residues 216 to 228 (FNTSFFEVSGGGD) are Mitochondrial intermembrane-facing. A helical transmembrane segment spans residues 229 to 263 (PILYEHLFWFFGHPEVYILIIPGFGIISHVVSTYS). H241 contacts Cu cation. The segment at residues 241–245 (HPEVY) is a cross-link (1'-histidyl-3'-tyrosine (His-Tyr)). O2 is bound at residue Y245. Over 264–269 (KKPVFG) the chain is Mitochondrial matrix. A helical transmembrane segment spans residues 270 to 295 (EISMVYAMASIGLLGFLVWSHHMYIV). Cu cation-binding residues include H290 and H291. Residues 296 to 298 (GLD) lie on the Mitochondrial intermembrane side of the membrane. The helical transmembrane segment at 299 to 327 (ADTRAYFTSATMIIAIPTGIKIFSWLATI) threads the bilayer. Residues 328-335 (HGGSIRLA) lie on the Mitochondrial matrix side of the membrane. Residues 336-358 (TPMLYAIAFLFLFTMGGLTGVAL) form a helical membrane-spanning segment. At 359 to 370 (ANASLDVAFHDT) the chain is on the mitochondrial intermembrane side. H368 and D369 together coordinate Mg(2+). The helical transmembrane segment at 371–400 (YYVVGHFHYVLSMGAIFSLFAGYYYWSPQI) threads the bilayer. H376 serves as a coordination point for heme a3. Residue H378 participates in Fe(II)-heme a binding. Over 401–406 (LGLNYN) the chain is Mitochondrial matrix. The chain crosses the membrane as a helical span at residues 407–431 (EKLAQIQFWLIFIGANVIFFPMHFL). The Mitochondrial intermembrane portion of the chain corresponds to 432-449 (GINGMPRRIPDYPDAFAG). Position 441 (P441) interacts with Ca(2+). The helical transmembrane segment at 450–474 (WNYVASIGSFIATLSLFLFIYILYD) threads the bilayer. Over 475–534 (QLVNGLNNKVNNKSVIYNKAPDFVESNTIFNLNTVKSSSIEFLLTSPPAVHSFNTPAVQS) the chain is Mitochondrial matrix.

It belongs to the heme-copper respiratory oxidase family. In terms of assembly, component of the cytochrome c oxidase (complex IV, CIV), a multisubunit enzyme composed of 12 subunits. The complex is composed of a catalytic core of 3 subunits COX1, COX2 and COX3, encoded in the mitochondrial DNA, and 9 supernumerary subunits COX4, COX5A (or COX5B), COX6, COX7, COX8, COX9, COX12, COX13 and COX26, which are encoded in the nuclear genome. The complex exists as a monomer or a dimer and forms supercomplexes (SCs) in the inner mitochondrial membrane with a dimer of ubiquinol-cytochrome c oxidoreductase (cytochrome b-c1 complex, complex III, CIII), resulting in 2 different assemblies (supercomplexes III(2)IV and III(2)IV(2)). Heme is required as a cofactor. It depends on Cu cation as a cofactor. Post-translationally, the N-terminus is blocked.

The protein resides in the mitochondrion inner membrane. It carries out the reaction 4 Fe(II)-[cytochrome c] + O2 + 8 H(+)(in) = 4 Fe(III)-[cytochrome c] + 2 H2O + 4 H(+)(out). It participates in energy metabolism; oxidative phosphorylation. Its function is as follows. Component of the cytochrome c oxidase, the last enzyme in the mitochondrial electron transport chain which drives oxidative phosphorylation. The respiratory chain contains 3 multisubunit complexes succinate dehydrogenase (complex II, CII), ubiquinol-cytochrome c oxidoreductase (cytochrome b-c1 complex, complex III, CIII) and cytochrome c oxidase (complex IV, CIV), that cooperate to transfer electrons derived from NADH and succinate to molecular oxygen, creating an electrochemical gradient over the inner membrane that drives transmembrane transport and the ATP synthase. Cytochrome c oxidase is the component of the respiratory chain that catalyzes the reduction of oxygen to water. Electrons originating from reduced cytochrome c in the intermembrane space (IMS) are transferred via the dinuclear copper A center (CU(A)) of COX2 and heme A of COX1 to the active site in COX1, a binuclear center (BNC) formed by heme A3 and copper B (CU(B)). The BNC reduces molecular oxygen to 2 water molecules using 4 electrons from cytochrome c in the IMS and 4 protons from the mitochondrial matrix. COX1 is a catalytic core subunit containing heme A and the active site BNC with heme A3 and the copper atom CU(B). In Saccharomyces cerevisiae (strain ATCC 204508 / S288c) (Baker's yeast), this protein is Cytochrome c oxidase subunit 1 (COX1).